Consider the following 876-residue polypeptide: GRB2-associated and regulator of MAPK protein 1 (876 aa).

Residues 12–320 (KDVKWSSVAV…HLVKGESWPE (309 aa)) form a CABIT region. A phosphotyrosine mark is found at Y105 and Y453. The tract at residues 496–572 (IPGTLGAAVK…SPSPTLSYYS (77 aa)) is disordered. The necessary for interaction with GRB2 stretch occupies residues 498-550 (GTLGAAVKSSDTALPPPPVPPKSEAVREECRLLNAPPVPPRSAKPLSTSPSIP). The span at 558–572 (RQQTRSPSPTLSYYS) shows a compositional bias: polar residues. Phosphoserine is present on residues S610 and S614. 2 disordered regions span residues 626–664 (WPNH…PKRN) and 738–763 (ASET…PDLS). Polar residues-rich tracts occupy residues 631–640 (SGASESQTRS) and 648–658 (RSYSYPRQKTP). One can recognise an SAM domain in the interval 811-876 (LSIEEVSKSL…QFINGWRPKI (66 aa)).

This sequence belongs to the GAREM family. In terms of assembly, isoform 1 interacts with EGFR. Isoform 1 interacts (via proline-rich domain and phosphorylated at Tyr-105 and Tyr-453) with GRB2 (via SH3 domains); the interaction occurs upon EGF stimulation. Isoform 1 interacts (phosphorylated at Tyr-453) with PTPN11; the interaction increases MAPK/ERK activity and does not affect the GRB2/SOS complex formation. Isoform 2 does not interact with GRB2. On EGF stimulation, phosphorylated on Tyr-105 and Tyr-453. In terms of tissue distribution, isoform 1 is ubiquitously expressed.

Functionally, acts as an adapter protein that plays a role in intracellular signaling cascades triggered either by the cell surface activated epidermal growth factor receptor and/or cytoplasmic protein tyrosine kinases. Promotes activation of the MAPK/ERK signaling pathway. Plays a role in the regulation of cell proliferation. In Homo sapiens (Human), this protein is GRB2-associated and regulator of MAPK protein 1 (GAREM1).